Reading from the N-terminus, the 273-residue chain is Formamidopyrimidine-DNA glycosylase (273 aa).

Catalysis depends on Pro-2, which acts as the Schiff-base intermediate with DNA. The active-site Proton donor is the Glu-3. Lys-58 functions as the Proton donor; for beta-elimination activity in the catalytic mechanism. His-91 and Arg-110 together coordinate DNA. The FPG-type zinc finger occupies 238–272 (QVYGKTGQPCPRCASMIVKIKLGGRGTHLCPHCQK). Catalysis depends on Arg-262, which acts as the Proton donor; for delta-elimination activity.

The protein belongs to the FPG family. In terms of assembly, monomer. Zn(2+) serves as cofactor.

The enzyme catalyses Hydrolysis of DNA containing ring-opened 7-methylguanine residues, releasing 2,6-diamino-4-hydroxy-5-(N-methyl)formamidopyrimidine.. The catalysed reaction is 2'-deoxyribonucleotide-(2'-deoxyribose 5'-phosphate)-2'-deoxyribonucleotide-DNA = a 3'-end 2'-deoxyribonucleotide-(2,3-dehydro-2,3-deoxyribose 5'-phosphate)-DNA + a 5'-end 5'-phospho-2'-deoxyribonucleoside-DNA + H(+). In terms of biological role, involved in base excision repair of DNA damaged by oxidation or by mutagenic agents. Acts as a DNA glycosylase that recognizes and removes damaged bases. Has a preference for oxidized purines, such as 7,8-dihydro-8-oxoguanine (8-oxoG). Has AP (apurinic/apyrimidinic) lyase activity and introduces nicks in the DNA strand. Cleaves the DNA backbone by beta-delta elimination to generate a single-strand break at the site of the removed base with both 3'- and 5'-phosphates. The sequence is that of Formamidopyrimidine-DNA glycosylase from Streptococcus thermophilus (strain ATCC BAA-250 / LMG 18311).